The primary structure comprises 261 residues: MLDKVKNVIVVLSGKGGVGKSTVSTQLALALRHTGHKVGLLDIDLCGPSVPYLLGLEGSDIYQCDDGWVPIYTDESKTLAVMSIGFLLKSRTDPVIWRGPKKTMMIKQFLQDVKWDELDYLIIDTPPGTSDEHITVMECLREVPCNGAIIVTTPQGVALDDVRKEITFCKKTGIKLLGIVENMSGFVCPHCTTCTNIFSSNGGIELANLAQIPHLGTLPIDPRVGILAGTTASVLSELPESSTAEVLKGLVQHLDTLTAQG.

Position 14–21 (14–21) interacts with ATP; sequence GKGGVGKS. Residues Cys-188 and Cys-191 each contribute to the [4Fe-4S] cluster site.

Belongs to the Mrp/NBP35 ATP-binding proteins family. NUBP2/CFD1 subfamily. In terms of assembly, heterotetramer of 2 Nubp1 and 2 Nubp2 chains. It depends on [4Fe-4S] cluster as a cofactor.

It localises to the cytoplasm. Functionally, component of the cytosolic iron-sulfur (Fe/S) protein assembly (CIA) machinery. Required for maturation of extramitochondrial Fe-S proteins. The Nubp1-Nubp2 heterotetramer forms a Fe-S scaffold complex, mediating the de novo assembly of an Fe-S cluster and its transfer to target apoproteins. The sequence is that of Cytosolic Fe-S cluster assembly factor Nubp2 homolog from Drosophila willistoni (Fruit fly).